Here is a 345-residue protein sequence, read N- to C-terminus: Platelet-derived growth factor C (345 aa).

The signal sequence occupies residues 1 to 22; sequence MLLLGLLLLTSALAGQRTGTRA. Positions 24–33 are enriched in polar residues; the sequence is SNLSSKLQLS. Residues 24–45 form a disordered region; the sequence is SNLSSKLQLSSDKEQNGVQDPR. N-linked (GlcNAc...) asparagine glycosylation is present at Asn-25. Positions 34-45 are enriched in basic and acidic residues; sequence SDKEQNGVQDPR. Residues 46 to 163 enclose the CUB domain; that stretch reads HERVVTISGN…PGFCIHYSII (118 aa). A glycan (N-linked (GlcNAc...) asparagine) is linked at Asn-55. 4 disulfides stabilise this stretch: Cys-104-Cys-124, Cys-250-Cys-294, Cys-280-Cys-335, and Cys-287-Cys-337.

This sequence belongs to the PDGF/VEGF growth factor family. In terms of assembly, homodimer; disulfide-linked. Interacts with PDGFRA homodimers, and with heterodimers formed by PDGFRA and PDGFRB. Interacts (via CUB domain) with PLAT (via kringle domain). In terms of processing, proteolytic removal of the N-terminal CUB domain releasing the core domain is necessary for unmasking the receptor-binding epitopes of the core domain. Cleavage after basic residues in the hinge region (region connecting the CUB and growth factor domains) gives rise to the receptor-binding form. Cleaved by PLAT and PLG. Sumoylated by SUMO1. Post-translationally, N-glycosylated. Mainly expressed in kidney, testis, liver, heart and brain (at protein level). Highly expressed in airway epithelium, interstitial cells and alveolar macrophages in the lung of mice overexpressing IL13. Expressed in the ovaries.

The protein resides in the cytoplasm. It localises to the cytosol. Its subcellular location is the secreted. The protein localises to the nucleus. It is found in the cytoplasmic granule. The protein resides in the cell membrane. Its function is as follows. Growth factor that plays an essential role in the regulation of embryonic development, cell proliferation, cell migration, survival and chemotaxis. Potent mitogen and chemoattractant for cells of mesenchymal origin. Required for normal skeleton formation during embryonic development, especially for normal development of the craniofacial skeleton and for normal development of the palate. Required for normal skin morphogenesis during embryonic development. Plays an important role in wound healing, where it appears to be involved in three stages: inflammation, proliferation and remodeling. Plays an important role in angiogenesis and blood vessel development. Involved in fibrotic processes, in which transformation of interstitial fibroblasts into myofibroblasts plus collagen deposition occurs. The CUB domain has mitogenic activity in coronary artery smooth muscle cells, suggesting a role beyond the maintenance of the latency of the PDGF domain. In the nucleus, PDGFC seems to have additional function. The sequence is that of Platelet-derived growth factor C (Pdgfc) from Mus musculus (Mouse).